We begin with the raw amino-acid sequence, 645 residues long: Cytochrome c oxidase subunit 1 (645 aa).

Residues 8–28 (LNYFYFSMWTGLSGAALATMI) form a helical membrane-spanning segment. Ca(2+)-binding residues include Glu31 and Gly36. His54 serves as a coordination point for Fe(II)-heme a. The next 8 helical transmembrane spans lie at 56–76 (LIMV…NFLI), 90–110 (LNSI…KIAF), 247–267 (VLSV…LTLI), 282–302 (VLIP…AIVT), 337–357 (LFWF…FGVA), 376–396 (IWAV…HMYL), 410–430 (ITIM…LTLA), and 438–458 (LVFL…FTGM). His343 contacts Cu cation. A cross-link (1'-histidyl-3'-tyrosine (His-Tyr)) is located at residues 343-347 (HPEVY). Tyr347 serves as a coordination point for O2. Residues His392 and His393 each coordinate Cu cation. His470 and Asp471 together coordinate Mg(2+). A run of 3 helical transmembrane segments spans residues 475 to 495 (VVAH…FTGL), 513 to 533 (FLHL…MFFL), and 555 to 575 (LASC…FGIF). His478 provides a ligand contact to heme a3. His480 contributes to the Fe(II)-heme a binding site.

It belongs to the heme-copper respiratory oxidase family. As to quaternary structure, component of the cytochrome c oxidase (complex IV, CIV), a multisubunit enzyme composed of a catalytic core of 3 subunits and several supernumerary subunits. The complex exists as a monomer or a dimer and forms supercomplexes (SCs) in the inner mitochondrial membrane with ubiquinol-cytochrome c oxidoreductase (cytochrome b-c1 complex, complex III, CIII). The cofactor is heme. It depends on Cu cation as a cofactor.

The protein localises to the mitochondrion inner membrane. It carries out the reaction 4 Fe(II)-[cytochrome c] + O2 + 8 H(+)(in) = 4 Fe(III)-[cytochrome c] + 2 H2O + 4 H(+)(out). It functions in the pathway energy metabolism; oxidative phosphorylation. Its function is as follows. Component of the cytochrome c oxidase, the last enzyme in the mitochondrial electron transport chain which drives oxidative phosphorylation. The respiratory chain contains 3 multisubunit complexes succinate dehydrogenase (complex II, CII), ubiquinol-cytochrome c oxidoreductase (cytochrome b-c1 complex, complex III, CIII) and cytochrome c oxidase (complex IV, CIV), that cooperate to transfer electrons derived from NADH and succinate to molecular oxygen, creating an electrochemical gradient over the inner membrane that drives transmembrane transport and the ATP synthase. Cytochrome c oxidase is the component of the respiratory chain that catalyzes the reduction of oxygen to water. Electrons originating from reduced cytochrome c in the intermembrane space (IMS) are transferred via the dinuclear copper A center (CU(A)) of subunit 2 and heme A of subunit 1 to the active site in subunit 1, a binuclear center (BNC) formed by heme A3 and copper B (CU(B)). The BNC reduces molecular oxygen to 2 water molecules using 4 electrons from cytochrome c in the IMS and 4 protons from the mitochondrial matrix. The polypeptide is Cytochrome c oxidase subunit 1 (COI) (Paramecium tetraurelia).